The chain runs to 249 residues: Ribonuclease 3 (249 aa).

The 123-residue stretch at Ser-29 to Arg-151 folds into the RNase III domain. A Mg(2+)-binding site is contributed by Glu-65. The active site involves Asp-69. The Mg(2+) site is built by Glu-137 and Glu-140. Residue Glu-140 is part of the active site. Residues Asn-179–Asn-249 enclose the DRBM domain. The tract at residues Gly-227 to Asn-249 is disordered. Positions Gln-236–Asn-249 are enriched in basic and acidic residues.

This sequence belongs to the ribonuclease III family. Homodimer. Mg(2+) serves as cofactor.

The protein localises to the cytoplasm. It catalyses the reaction Endonucleolytic cleavage to 5'-phosphomonoester.. Digests double-stranded RNA. Involved in the processing of primary rRNA transcript to yield the immediate precursors to the large and small rRNAs (23S and 16S). Processes some mRNAs, and tRNAs when they are encoded in the rRNA operon. Processes pre-crRNA and tracrRNA of type II CRISPR loci if present in the organism. The protein is Ribonuclease 3 of Prochlorococcus marinus (strain SARG / CCMP1375 / SS120).